We begin with the raw amino-acid sequence, 1498 residues long: DNA-directed RNA polymerase subunit beta' (1498 aa).

Zn(2+) is bound by residues cysteine 67, cysteine 69, cysteine 82, and cysteine 85. 3 residues coordinate Mg(2+): aspartate 499, aspartate 501, and aspartate 503. Zn(2+) contacts are provided by cysteine 867, cysteine 943, cysteine 950, and cysteine 953.

Belongs to the RNA polymerase beta' chain family. The RNAP catalytic core consists of 2 alpha, 1 beta, 1 beta' and 1 omega subunit. When a sigma factor is associated with the core the holoenzyme is formed, which can initiate transcription. The cofactor is Mg(2+). Zn(2+) is required as a cofactor.

The catalysed reaction is RNA(n) + a ribonucleoside 5'-triphosphate = RNA(n+1) + diphosphate. Its function is as follows. DNA-dependent RNA polymerase catalyzes the transcription of DNA into RNA using the four ribonucleoside triphosphates as substrates. The protein is DNA-directed RNA polymerase subunit beta' of Chlorobium phaeobacteroides (strain BS1).